We begin with the raw amino-acid sequence, 434 residues long: Serine hydroxymethyltransferase (434 aa).

(6S)-5,6,7,8-tetrahydrofolate-binding positions include Leu-132 and 136–138; that span reads GHL. Lys-241 is modified (N6-(pyridoxal phosphate)lysine).

It belongs to the SHMT family. In terms of assembly, homodimer. Pyridoxal 5'-phosphate is required as a cofactor.

It localises to the cytoplasm. It catalyses the reaction (6R)-5,10-methylene-5,6,7,8-tetrahydrofolate + glycine + H2O = (6S)-5,6,7,8-tetrahydrofolate + L-serine. It participates in one-carbon metabolism; tetrahydrofolate interconversion. Its pathway is amino-acid biosynthesis; glycine biosynthesis; glycine from L-serine: step 1/1. Functionally, catalyzes the reversible interconversion of serine and glycine with tetrahydrofolate (THF) serving as the one-carbon carrier. This reaction serves as the major source of one-carbon groups required for the biosynthesis of purines, thymidylate, methionine, and other important biomolecules. Also exhibits THF-independent aldolase activity toward beta-hydroxyamino acids, producing glycine and aldehydes, via a retro-aldol mechanism. The polypeptide is Serine hydroxymethyltransferase (Kineococcus radiotolerans (strain ATCC BAA-149 / DSM 14245 / SRS30216)).